The primary structure comprises 452 residues: NAD kinase 2, mitochondrial (452 aa).

The N-terminal 50 residues, 1-50 (MTCYRGFLLGSCRRVAGGRAALRGSGSGADGRRHLGHGQPRELAGGGSPA), are a transit peptide targeting the mitochondrion. A disordered region spans residues 23-52 (RGSGSGADGRRHLGHGQPRELAGGGSPADG). Lys-64 bears the N6-acetyllysine; alternate mark. Lys-64 carries the N6-succinyllysine; alternate modification. Ser-176 carries the post-translational modification Phosphoserine. Lys-312 is subject to N6-succinyllysine. The residue at position 327 (Lys-327) is an N6-acetyllysine; alternate. N6-succinyllysine; alternate is present on Lys-327. Ser-377 carries the phosphoserine modification. Position 407 is an N6-acetyllysine (Lys-407).

It belongs to the NAD kinase family. Homodimer.

It localises to the mitochondrion. The catalysed reaction is NAD(+) + ATP = ADP + NADP(+) + H(+). Its activity is regulated as follows. Inhibited by NADH, NADPH and NADP(+). Mitochondrial NAD(+) kinase that phosphorylates NAD(+) to yield NADP(+). Can use both ATP or inorganic polyphosphate as the phosphoryl donor. This Mus musculus (Mouse) protein is NAD kinase 2, mitochondrial (Nadk2).